The sequence spans 216 residues: Adenylate kinase (216 aa).

ATP is bound at residue 10–15; that stretch reads GAGKGT. The tract at residues 30 to 59 is NMP; sequence STGDMLRAAVKAETPVGLKAKAVMEAGQLV. AMP-binding positions include threonine 31, arginine 36, 57–59, 85–88, and glutamine 92; these read QLV and GYPR. The tract at residues 126–164 is LID; the sequence is GRYTCATCGKGYHDKFEKPAVEGTCDKCGGHEFKRRPDD. Arginine 127 contacts ATP. Zn(2+)-binding residues include cysteine 130, cysteine 133, cysteine 150, and cysteine 153. AMP is bound by residues arginine 161 and arginine 172. ATP is bound at residue alanine 200.

Belongs to the adenylate kinase family. Monomer.

It localises to the cytoplasm. The enzyme catalyses AMP + ATP = 2 ADP. The protein operates within purine metabolism; AMP biosynthesis via salvage pathway; AMP from ADP: step 1/1. Functionally, catalyzes the reversible transfer of the terminal phosphate group between ATP and AMP. Plays an important role in cellular energy homeostasis and in adenine nucleotide metabolism. The sequence is that of Adenylate kinase from Novosphingobium aromaticivorans (strain ATCC 700278 / DSM 12444 / CCUG 56034 / CIP 105152 / NBRC 16084 / F199).